The chain runs to 423 residues: p-aminobenzoyl-glutamate hydrolase subunit A homolog (423 aa).

This sequence belongs to the peptidase M20 family. Mn(2+) serves as cofactor.

In terms of biological role, catalyzes the cleavage of p-aminobenzoyl-glutamate (PABA-GLU) to form p-aminobenzoate (PABA) and glutamate. The chain is p-aminobenzoyl-glutamate hydrolase subunit A homolog (abgA) from Haemophilus influenzae (strain ATCC 51907 / DSM 11121 / KW20 / Rd).